The chain runs to 101 residues: Small ribosomal subunit protein uS14 (101 aa).

It belongs to the universal ribosomal protein uS14 family. In terms of assembly, part of the 30S ribosomal subunit. Contacts proteins S3 and S10.

In terms of biological role, binds 16S rRNA, required for the assembly of 30S particles and may also be responsible for determining the conformation of the 16S rRNA at the A site. The protein is Small ribosomal subunit protein uS14 of Rhizobium meliloti (strain 1021) (Ensifer meliloti).